The primary structure comprises 430 residues: Oleandomycin glycosyltransferase (430 aa).

The disordered stretch occupies residues G385–L430. The segment covering G386–G409 has biased composition (basic and acidic residues).

The protein belongs to the UDP-glycosyltransferase family.

Specifically inactivates oleandomycin via 2'-O-glycosylation using UDP-glucose. The chain is Oleandomycin glycosyltransferase (oleD) from Streptomyces antibioticus.